Here is a 261-residue protein sequence, read N- to C-terminus: Undecaprenyl-diphosphatase (261 aa).

Transmembrane regions (helical) follow at residues 16 to 36 (TEFL…LFGF), 40 to 60 (GLVF…VYFW), 82 to 102 (FWFL…LEDI), 107 to 127 (LRAP…LYLA), 140 to 160 (IRFG…IPGV), 183 to 203 (FSFL…MLKM), 211 to 231 (SFVL…WFLI), and 239 to 259 (FNIF…IALL).

Belongs to the UppP family.

It localises to the cell membrane. The catalysed reaction is di-trans,octa-cis-undecaprenyl diphosphate + H2O = di-trans,octa-cis-undecaprenyl phosphate + phosphate + H(+). Catalyzes the dephosphorylation of undecaprenyl diphosphate (UPP). Confers resistance to bacitracin. This Desulforudis audaxviator (strain MP104C) protein is Undecaprenyl-diphosphatase.